The sequence spans 474 residues: Dihydrolipoyl dehydrogenase (474 aa).

Residues 34 to 51 (EGNPYDDPKGEARLGGTC), K60, and G124 contribute to the FAD site. C51 and C56 are joined by a disulfide. Residues 189–193 (GAGVI), E212, V246, and 278–281 (SVGR) contribute to the NAD(+) site. FAD-binding residues include D321 and A329. The active-site Proton acceptor is H453.

Belongs to the class-I pyridine nucleotide-disulfide oxidoreductase family. It depends on FAD as a cofactor.

It localises to the cytoplasm. The catalysed reaction is N(6)-[(R)-dihydrolipoyl]-L-lysyl-[protein] + NAD(+) = N(6)-[(R)-lipoyl]-L-lysyl-[protein] + NADH + H(+). The branched-chain alpha-keto dehydrogenase complex catalyzes the overall conversion of alpha-keto acids to acyl-CoA and CO(2). It contains multiple copies of 3 enzymatic components: branched-chain alpha-keto acid decarboxylase (E1), lipoamide acyltransferase (E2) and lipoamide dehydrogenase (E3). The polypeptide is Dihydrolipoyl dehydrogenase (odhL) (Cupriavidus necator (strain ATCC 17699 / DSM 428 / KCTC 22496 / NCIMB 10442 / H16 / Stanier 337) (Ralstonia eutropha)).